A 181-amino-acid polypeptide reads, in one-letter code: Large ribosomal subunit protein uL5 (181 aa).

The protein belongs to the universal ribosomal protein uL5 family. As to quaternary structure, part of the 50S ribosomal subunit; part of the 5S rRNA/L5/L18/L25 subcomplex. Contacts the 5S rRNA and the P site tRNA. Forms a bridge to the 30S subunit in the 70S ribosome.

This is one of the proteins that bind and probably mediate the attachment of the 5S RNA into the large ribosomal subunit, where it forms part of the central protuberance. In the 70S ribosome it contacts protein S13 of the 30S subunit (bridge B1b), connecting the 2 subunits; this bridge is implicated in subunit movement. Contacts the P site tRNA; the 5S rRNA and some of its associated proteins might help stabilize positioning of ribosome-bound tRNAs. In Mesomycoplasma hyopneumoniae (strain 232) (Mycoplasma hyopneumoniae), this protein is Large ribosomal subunit protein uL5.